The following is a 188-amino-acid chain: Protein YOP1 (188 aa).

Over 1-35 (MAEIAGNLQRILQSLDRQFAGNKYLQEFERKTGFP) the chain is Cytoplasmic. Residues 36–55 (KSYAIAGAGVAYLFIIFINV) traverse the membrane as a helical segment. Topologically, residues 56–57 (GG) are lumenal. Residues 58–78 (VGEILSNFLGFVLPCYYSLHA) form a helical membrane-spanning segment. Topologically, residues 79–88 (IKTTTTADDT) are cytoplasmic. Residues 89-105 (ELLTYWIVFAFFSVIEF) traverse the membrane as a helical segment. Topologically, residues 106-108 (WSK) are lumenal. Residues 109 to 127 (AILYWVPFYWFFKTIFLIF) traverse the membrane as a helical segment. At 128 to 188 (IALPQLGGAS…TGAASHQSSD (61 aa)) the chain is on the cytoplasmic side. The interval 163-188 (ISSKMEQAAKGASARATGAASHQSSD) is disordered. Low complexity predominate over residues 170 to 188 (AAKGASARATGAASHQSSD).

The protein belongs to the DP1 family. As to quaternary structure, oligomer.

The protein localises to the endoplasmic reticulum membrane. Its subcellular location is the golgi apparatus membrane. Functionally, required to generate and maintain the structure of the tubular endoplasmic reticulum network and the vacuole. Induces high curvature in membranes and causes membrane tubule formation. Involved in membrane/vesicle trafficking. The polypeptide is Protein YOP1 (YOP1) (Eremothecium gossypii (strain ATCC 10895 / CBS 109.51 / FGSC 9923 / NRRL Y-1056) (Yeast)).